The chain runs to 592 residues: Putative phosphatidylinositol 4-kinase alpha-like protein P2 (592 aa).

Residues 180 to 318 (EQLVEENTGS…ISWQAAIFKL (139 aa)) form a pleckstrin homology (PH) domain conferring phosphoinositide binding specificity region. Positions 275–576 (KVKRCGVSEL…VIQSCFLSNR (302 aa)) constitute a PI3K/PI4K catalytic domain. The G-loop stretch occupies residues 281–287 (VSELEKE). Residues 441–449 (QIKDRHNGN) form a catalytic loop region. The activation loop stretch occupies residues 460-484 (HIDFGFMFESSPGGNLGWEPDIKLT).

Belongs to the PI3/PI4-kinase family. Type III PI4K subfamily.

The protein is Putative phosphatidylinositol 4-kinase alpha-like protein P2 (PI4KAP2) of Homo sapiens (Human).